The following is a 360-amino-acid chain: Probable mannan endo-1,4-beta-mannosidase A (360 aa).

Residues 1–18 form the signal peptide; sequence MKLSQILTFASLLSGALA. Residues asparagine 142 and asparagine 178 each coordinate substrate. Glutamate 179 (proton donor) is an active-site residue. Tyrosine 254 contributes to the substrate binding site. Glutamate 287 functions as the Nucleophile in the catalytic mechanism. N-linked (GlcNAc...) asparagine glycosylation occurs at asparagine 307. Position 317 (tryptophan 317) interacts with substrate.

The protein belongs to the glycosyl hydrolase 5 (cellulase A) family.

The protein resides in the secreted. The catalysed reaction is Random hydrolysis of (1-&gt;4)-beta-D-mannosidic linkages in mannans, galactomannans and glucomannans.. Endo-1,4-mannanase, a crucial enzyme for depolymerization of seed galactomannans and wood galactoglucomannans. This is Probable mannan endo-1,4-beta-mannosidase A (manA) from Aspergillus clavatus (strain ATCC 1007 / CBS 513.65 / DSM 816 / NCTC 3887 / NRRL 1 / QM 1276 / 107).